The sequence spans 251 residues: Regulator of G-protein signaling 9-binding protein C (251 aa).

Over 1-230 the chain is Cytoplasmic; sequence MPLQNVKVAD…NSKGCCSDGQ (230 aa). 2 coiled-coil regions span residues 53-94 and 158-187; these read LRDE…ELER and ANKA…MKVN. The helical; Anchor for type IV membrane protein transmembrane segment at 231-250 threads the bilayer; it reads LIVSLLLCGTALVAITLYSI. Residue Leu-251 is a topological domain, extracellular.

Belongs to the RGS7BP/RGS9BP family.

The protein resides in the membrane. Functionally, regulator of G protein-coupled receptor (GPCR) signaling. Probably acts by regulating the activity of some 'R7' family protein (RGS6, RGS7, RGS9 and/or RGS11). The protein is Regulator of G-protein signaling 9-binding protein C (rgs9bp-c) of Xenopus laevis (African clawed frog).